The sequence spans 364 residues: MQERHTEQDYRALLIADTPIIDVRAPIEFEQGAMPAAINLPLMNNDERAAVGTCYKQQGSDAALALGHKLVAGEIRQQRMDAWRAACLQNPQGILCCARGGQRSHIVQSWLHAAGIDYPLVEGGYKALRQTAIQATIELAQKPIVLIGGCTGSGKTLLVQQQPNGVDLEGLARHRGSAFGRTLQPQLSQASFENLLAAEMLKTDARQNLRLWVLEDESRMIGSNHLPECLRERMTQAAIAVVEDPFEIRLERLNEEYFLRMHHDFTHAYGDEQGWQEYCEYLHHGLSAIKRRLGLQRYNELAARLDAALTTQLTTGSTDGHLAWLVPLLEEYYDPMYRYQLEKKAEKVVFRGEWAEVAEWVKAQ.

The region spanning 14 to 137 (LIADTPIIDV…LRQTAIQATI (124 aa)) is the Rhodanese domain. C97 (S-selanylcysteine intermediate) is an active-site residue.

Belongs to the SelU family. In terms of assembly, monomer.

It carries out the reaction 5-methylaminomethyl-2-thiouridine(34) in tRNA + selenophosphate + (2E)-geranyl diphosphate + H2O + H(+) = 5-methylaminomethyl-2-selenouridine(34) in tRNA + (2E)-thiogeraniol + phosphate + diphosphate. The catalysed reaction is 5-methylaminomethyl-2-thiouridine(34) in tRNA + (2E)-geranyl diphosphate = 5-methylaminomethyl-S-(2E)-geranyl-thiouridine(34) in tRNA + diphosphate. It catalyses the reaction 5-methylaminomethyl-S-(2E)-geranyl-thiouridine(34) in tRNA + selenophosphate + H(+) = 5-methylaminomethyl-2-(Se-phospho)selenouridine(34) in tRNA + (2E)-thiogeraniol. The enzyme catalyses 5-methylaminomethyl-2-(Se-phospho)selenouridine(34) in tRNA + H2O = 5-methylaminomethyl-2-selenouridine(34) in tRNA + phosphate. Its function is as follows. Involved in the post-transcriptional modification of the uridine at the wobble position (U34) of tRNA(Lys), tRNA(Glu) and tRNA(Gln). Catalyzes the conversion of 2-thiouridine (S2U-RNA) to 2-selenouridine (Se2U-RNA). Acts in a two-step process involving geranylation of 2-thiouridine (S2U) to S-geranyl-2-thiouridine (geS2U) and subsequent selenation of the latter derivative to 2-selenouridine (Se2U) in the tRNA chain. The chain is tRNA 2-selenouridine synthase from Escherichia coli O157:H7.